A 170-amino-acid chain; its full sequence is Protein SprT (170 aa).

The SprT-like domain occupies 22-165 (LQLANQHLGT…RQCGEKLQFI (144 aa)). His78 lines the Zn(2+) pocket. Glu79 is an active-site residue. Zn(2+) is bound at residue His82.

It belongs to the SprT family. Zn(2+) serves as cofactor.

It localises to the cytoplasm. In Yersinia pseudotuberculosis serotype IB (strain PB1/+), this protein is Protein SprT.